We begin with the raw amino-acid sequence, 107 residues long: UPF0102 protein Tlet_0667 (107 aa).

This sequence belongs to the UPF0102 family.

The sequence is that of UPF0102 protein Tlet_0667 from Pseudothermotoga lettingae (strain ATCC BAA-301 / DSM 14385 / NBRC 107922 / TMO) (Thermotoga lettingae).